A 106-amino-acid polypeptide reads, in one-letter code: U1-lycotoxin-Ls1b (106 aa).

The signal sequence occupies residues 1–19 (MKVLVVVALLVTLISYSSS). The propeptide occupies 20–40 (EGIDDLEADELLSLMANEQTR). Disulfide bonds link cysteine 43–cysteine 58, cysteine 50–cysteine 67, cysteine 57–cysteine 85, and cysteine 69–cysteine 83.

The protein belongs to the neurotoxin 19 (CSTX) family. 04 (U1-Lctx) subfamily. Expressed by the venom gland.

It is found in the secreted. This is U1-lycotoxin-Ls1b from Lycosa singoriensis (Wolf spider).